Reading from the N-terminus, the 199-residue chain is uncharacterized protein (199 aa).

Residues 1-41 (MKFKRDENQNSTHHRGNKNNTNNDDDDKEEEEEIINDTTMP) are disordered. Positions 23-35 (NDDDDKEEEEEII) are enriched in acidic residues. 3 helical membrane passes run 73 to 93 (LILD…FAFW), 96 to 116 (ISTY…VSFL), and 166 to 186 (IAIA…SPYL).

Its subcellular location is the membrane. This is an uncharacterized protein from Dictyostelium discoideum (Social amoeba).